We begin with the raw amino-acid sequence, 207 residues long: Guanylate kinase (207 aa).

In terms of domain architecture, Guanylate kinase-like spans 4 to 184 (GTLYIVSAPS…ALMDFKAILR (181 aa)). 11-18 (APSGAGKS) is a binding site for ATP.

Belongs to the guanylate kinase family.

It is found in the cytoplasm. It carries out the reaction GMP + ATP = GDP + ADP. In terms of biological role, essential for recycling GMP and indirectly, cGMP. This Vibrio parahaemolyticus serotype O3:K6 (strain RIMD 2210633) protein is Guanylate kinase.